Consider the following 268-residue polypeptide: MQSSRSVSTEAFVRLVVDIGNTTTTLAVFTGETEPSVESVQSTLFGEPKAVAELFLSLAHRHGTPQAVAVCSVVPAAAASCSAQLESLFSVPVVTIAASLRLPFQLDYATPHTFGADRIALCAWSRHLFGDCPVIAVDIGTAITFDVLDAEGNYRGGLIMPGIDMMAGALNSRTAQLPLVDIDKPESLLGRSTIECIRNGIFWGAVRQIAGLIDAIGAELPGESKAAPAEVLVTGGNSRIIAPEIASITHLDELAVLRGIDLLLRLNS.

18 to 25 (DIGNTTTT) contributes to the ATP binding site. Substrate-binding positions include Y108 and 115–118 (GADR). D117 serves as the catalytic Proton acceptor. D138 serves as a coordination point for K(+). An ATP-binding site is contributed by T141. T193 is a substrate binding site.

It belongs to the type III pantothenate kinase family. Homodimer. NH4(+) serves as cofactor. Requires K(+) as cofactor.

The protein resides in the cytoplasm. It catalyses the reaction (R)-pantothenate + ATP = (R)-4'-phosphopantothenate + ADP + H(+). It functions in the pathway cofactor biosynthesis; coenzyme A biosynthesis; CoA from (R)-pantothenate: step 1/5. Functionally, catalyzes the phosphorylation of pantothenate (Pan), the first step in CoA biosynthesis. The sequence is that of Type III pantothenate kinase from Chlorobaculum parvum (strain DSM 263 / NCIMB 8327) (Chlorobium vibrioforme subsp. thiosulfatophilum).